We begin with the raw amino-acid sequence, 783 residues long: Probable potassium transporter 2 (783 aa).

Over 1 to 21 (MDAEAGVGGADQLPWRQHYRN) the chain is Cytoplasmic. A helical membrane pass occupies residues 22–42 (LLLLAYQSFGVVYGDLSTSPL). The Extracellular portion of the chain corresponds to 43–61 (YVYKSTFSGRLRRYQDEQT). A helical transmembrane segment spans residues 62–82 (VFGVLSLIFWTFTLIPLLKYV). At 83–152 (TIVLSADDNG…FMEKHKNART (70 aa)) the chain is on the cytoplasmic side. The chain crosses the membrane as a helical span at residues 153–173 (VLLLIVLCGASMMIGDGILTP). Topologically, residues 174 to 189 (AISVLSSMSGLKVRAT) are extracellular. A helical membrane pass occupies residues 190 to 210 (GLHDRSVVLLSCIVLVGLFAL). Residues 211–217 (QHRGTQK) are Cytoplasmic-facing. Residues 218–238 (VAFMFAPIVVIWLFCIGGIGL) traverse the membrane as a helical segment. At 239–268 (YNIIHWNPRIYQALSPYYIVKFFRTTGKDG) the chain is on the extracellular side. The chain crosses the membrane as a helical span at residues 269–289 (WIALGGILLSMTGCEAMFADL). At 290–298 (GHFTSASVR) the chain is on the cytoplasmic side. Residues 299–319 (LAFITIIYPCLILQYMGQAAF) form a helical membrane-spanning segment. The Extracellular portion of the chain corresponds to 320 to 338 (LSKNILDMPTGFYDSIPGP). A helical membrane pass occupies residues 339-359 (IFWPVFVVATLAAVVGSQAVI). Residues 360-390 (SATFSIVKQCHSLGCFPRVKVVHTSRWIYGQ) are Cytoplasmic-facing. The chain crosses the membrane as a helical span at residues 391-411 (IYIPEINWILMVLCVAVTVAF). At 412–422 (RDITLIGNAYG) the chain is on the extracellular side. The chain crosses the membrane as a helical span at residues 423–443 (VACMTVMFVTTFLMALIMIFV). Residues 444-447 (WQKN) lie on the Cytoplasmic side of the membrane. The chain crosses the membrane as a helical span at residues 448–468 (IIFALSFFLLFGSVEVVYLSS). The Extracellular segment spans residues 469–475 (SLMKVTQ). The helical transmembrane segment at 476–496 (GGWVPLVLALIFMSVMYIWHY) threads the bilayer. The Cytoplasmic portion of the chain corresponds to 497–783 (GTRKKYQYDL…LIEVGMAYQV (287 aa)). Residues 662-691 (DLADSMTMRSTKSESLRSLQSSYEQESPNV) are disordered. The segment covering 677 to 691 (LRSLQSSYEQESPNV) has biased composition (polar residues).

It belongs to the HAK/KUP transporter (TC 2.A.72.3) family.

The protein localises to the cell membrane. It catalyses the reaction K(+)(in) = K(+)(out). The enzyme catalyses Na(+)(in) = Na(+)(out). In terms of biological role, high-affinity potassium transporter. Can transport sodium under high sodium and low potassium concentrations in the extracellular environment. This is Probable potassium transporter 2 (HAK2) from Oryza sativa subsp. japonica (Rice).